The sequence spans 637 residues: Chaperone protein HtpG (637 aa).

The tract at residues 1 to 345 (MSQQETHGFQ…SNDLPLNVSR (345 aa)) is a; substrate-binding. A b region spans residues 346-562 (EILQDNHVTK…DGEMSTQMIK (217 aa)). Residues 563 to 637 (LMQAAGQPVP…MNQMLLANMK (75 aa)) are c.

This sequence belongs to the heat shock protein 90 family. In terms of assembly, homodimer.

Its subcellular location is the cytoplasm. Functionally, molecular chaperone. Has ATPase activity. In Shewanella baltica (strain OS155 / ATCC BAA-1091), this protein is Chaperone protein HtpG.